Reading from the N-terminus, the 673-residue chain is Probable potassium transport system protein Kup 1 (673 aa).

13 helical membrane passes run 14–34 (GAGF…SPLY), 58–78 (LSLI…WIAL), 101–121 (WLII…ALTP), 147–167 (LPIV…QRFG), 175–195 (FGPV…INLF), 196–216 (GDFS…LLSP), 220–240 (AGIF…ALYS), 252–272 (VSWP…AAWL), 294–314 (LIIF…QALI), 345–365 (LYIP…VVYF), 374–394 (AYGL…TVYL), 403–423 (VFVV…FAAS), and 427–447 (FLHG…VMAI).

The protein belongs to the HAK/KUP transporter (TC 2.A.72) family.

The protein localises to the cell membrane. The enzyme catalyses K(+)(in) + H(+)(in) = K(+)(out) + H(+)(out). Transport of potassium into the cell. Likely operates as a K(+):H(+) symporter. The chain is Probable potassium transport system protein Kup 1 from Lactococcus lactis subsp. cremoris (strain SK11).